The sequence spans 336 residues: UPF0324 membrane protein BT_1919 (336 aa).

Transmembrane regions (helical) follow at residues 2–19, 23–45, 85–107, 117–134, 147–169, 210–232, 253–275, and 310–332; these read LHGV…FYIG, FVRS…YANS, IGLP…GIYL, IALL…AAIL, TAVS…PFLY, AIIV…TYLV, WFAI…AQLV, and FVLA…KYLT.

Belongs to the UPF0324 family.

The protein resides in the cell membrane. The sequence is that of UPF0324 membrane protein BT_1919 from Bacteroides thetaiotaomicron (strain ATCC 29148 / DSM 2079 / JCM 5827 / CCUG 10774 / NCTC 10582 / VPI-5482 / E50).